A 160-amino-acid polypeptide reads, in one-letter code: Cytochrome b6-f complex subunit 4 (160 aa).

A run of 3 helical transmembrane segments spans residues 36-56, 95-115, and 127-147; these read ILYM…GLAI, LLGI…PFIE, and PIAM…GAGA.

The protein belongs to the cytochrome b family. PetD subfamily. The 4 large subunits of the cytochrome b6-f complex are cytochrome b6, subunit IV (17 kDa polypeptide, PetD), cytochrome f and the Rieske protein, while the 4 small subunits are PetG, PetL, PetM and PetN. The complex functions as a dimer.

It is found in the cellular thylakoid membrane. Its function is as follows. Component of the cytochrome b6-f complex, which mediates electron transfer between photosystem II (PSII) and photosystem I (PSI), cyclic electron flow around PSI, and state transitions. This Synechocystis sp. (strain ATCC 27184 / PCC 6803 / Kazusa) protein is Cytochrome b6-f complex subunit 4.